A 214-amino-acid chain; its full sequence is Glycerol-3-phosphate acyltransferase (214 aa).

5 consecutive transmembrane segments (helical) span residues 4–24 (LIVA…IVSA), 52–72 (AAIL…WFVV), 82–102 (ETSV…PVFF), 118–138 (LAIN…VAFF), and 159–179 (FLFG…LLVW).

This sequence belongs to the PlsY family. Probably interacts with PlsX.

Its subcellular location is the cell inner membrane. It catalyses the reaction an acyl phosphate + sn-glycerol 3-phosphate = a 1-acyl-sn-glycero-3-phosphate + phosphate. The protein operates within lipid metabolism; phospholipid metabolism. Catalyzes the transfer of an acyl group from acyl-phosphate (acyl-PO(4)) to glycerol-3-phosphate (G3P) to form lysophosphatidic acid (LPA). This enzyme utilizes acyl-phosphate as fatty acyl donor, but not acyl-CoA or acyl-ACP. This chain is Glycerol-3-phosphate acyltransferase, found in Paraburkholderia phytofirmans (strain DSM 17436 / LMG 22146 / PsJN) (Burkholderia phytofirmans).